A 504-amino-acid polypeptide reads, in one-letter code: Hexokinase-10 (504 aa).

A helical transmembrane segment spans residues 7–29; that stretch reads GWVRVAAVGWAVAACAVAAGMVA. The Hexokinase domain maps to 39 to 493; it reads NRAVAVVRDL…SGTGAALLAA (455 aa). The segment at 94–226 is hexokinase small subdomain; sequence DGSEEGISYA…GLNMKVNVLV (133 aa). Glycine 108 and threonine 109 together coordinate ADP. D-glucose-binding residues include threonine 192, lysine 193, asparagine 227, asparagine 254, glutamate 282, and glutamate 313. The interval 227 to 482 is hexokinase large subdomain; that stretch reads NNTVGTLALG…ATVSLRVMEE (256 aa). Glycine 447 is a binding site for ADP.

Belongs to the hexokinase family. In terms of tissue distribution, expressed specifically in stamen.

The protein resides in the plastid. It is found in the chloroplast outer membrane. The enzyme catalyses a D-hexose + ATP = a D-hexose 6-phosphate + ADP + H(+). The catalysed reaction is D-fructose + ATP = D-fructose 6-phosphate + ADP + H(+). It carries out the reaction D-glucose + ATP = D-glucose 6-phosphate + ADP + H(+). The protein operates within carbohydrate metabolism; hexose metabolism. It participates in carbohydrate degradation; glycolysis; D-glyceraldehyde 3-phosphate and glycerone phosphate from D-glucose: step 1/4. Its function is as follows. Fructose and glucose phosphorylating enzyme. This chain is Hexokinase-10 (HXK10), found in Oryza sativa subsp. japonica (Rice).